Reading from the N-terminus, the 314-residue chain is Probable cell division protein WhiA (314 aa).

A DNA-binding region (H-T-H motif) is located at residues 274 to 305 (SLAELGDRLEISKSGANHRMRKLKALEDMINA).

It belongs to the WhiA family.

Functionally, involved in cell division and chromosome segregation. The chain is Probable cell division protein WhiA from Leuconostoc citreum (strain KM20).